A 404-amino-acid chain; its full sequence is Phosphopentomutase (404 aa).

Asp-10, Asp-303, His-308, Asp-344, His-345, and His-356 together coordinate Mn(2+).

This sequence belongs to the phosphopentomutase family. Mn(2+) serves as cofactor.

It localises to the cytoplasm. The catalysed reaction is 2-deoxy-alpha-D-ribose 1-phosphate = 2-deoxy-D-ribose 5-phosphate. The enzyme catalyses alpha-D-ribose 1-phosphate = D-ribose 5-phosphate. The protein operates within carbohydrate degradation; 2-deoxy-D-ribose 1-phosphate degradation; D-glyceraldehyde 3-phosphate and acetaldehyde from 2-deoxy-alpha-D-ribose 1-phosphate: step 1/2. Isomerase that catalyzes the conversion of deoxy-ribose 1-phosphate (dRib-1-P) and ribose 1-phosphate (Rib-1-P) to deoxy-ribose 5-phosphate (dRib-5-P) and ribose 5-phosphate (Rib-5-P), respectively. In Shewanella putrefaciens (strain CN-32 / ATCC BAA-453), this protein is Phosphopentomutase.